The following is a 206-amino-acid chain: Small ribosomal subunit protein uS4B (206 aa).

The S4 RNA-binding domain occupies 96-156; sequence GRLDNVVYRM…EKAKKQSRIG (61 aa).

It belongs to the universal ribosomal protein uS4 family. In terms of assembly, part of the 30S ribosomal subunit. Contacts protein S5. The interaction surface between S4 and S5 is involved in control of translational fidelity.

One of the primary rRNA binding proteins, it binds directly to 16S rRNA where it nucleates assembly of the body of the 30S subunit. In terms of biological role, with S5 and S12 plays an important role in translational accuracy. The chain is Small ribosomal subunit protein uS4B from Psychromonas ingrahamii (strain DSM 17664 / CCUG 51855 / 37).